A 261-amino-acid chain; its full sequence is Mlc titration factor A (261 aa).

Positions 111, 148, 152, and 211 each coordinate Zn(2+).

The protein belongs to the MtfA family. Interacts with Mlc. Zn(2+) serves as cofactor.

It localises to the cytoplasm. In terms of biological role, involved in the modulation of the activity of the glucose-phosphotransferase system (glucose-PTS). Interacts with the transcriptional repressor Mlc, preventing its interaction with DNA and leading to the modulation of expression of genes regulated by Mlc, including ptsG, which encodes the PTS system glucose-specific EIICB component. Its function is as follows. Shows zinc-dependent metallopeptidase activity. This is Mlc titration factor A from Edwardsiella ictaluri (strain 93-146).